Here is a 214-residue protein sequence, read N- to C-terminus: Osteoclast-stimulating factor 1 (214 aa).

Residue Ser-2 is modified to N-acetylserine. The 60-residue stretch at 12-71 (GQVKVFRALYTFEPRTPDELYFEEGDIIYITDMSDTNWWKGTSKGRTGLIPSNYVAEQAE) folds into the SH3 domain. ANK repeat units lie at residues 72–101 (SIDN…GVNG), 105–135 (AGST…ELNQ), and 139–168 (LGDT…RTDL). Position 200 is a phosphothreonine (Thr-200). Phosphoserine is present on residues Ser-202 and Ser-213.

Interacts with SRC and SMN1. Interacts with FASLG.

Its subcellular location is the cytoplasm. Functionally, induces bone resorption, acting probably through a signaling cascade which results in the secretion of factor(s) enhancing osteoclast formation and activity. This is Osteoclast-stimulating factor 1 (OSTF1) from Sus scrofa (Pig).